We begin with the raw amino-acid sequence, 206 residues long: Large ribosomal subunit protein uL4 (206 aa).

The interval 46 to 78 is disordered; the sequence is GNRAQKDREQVKHTTKKPWRQKGTGRARAGMSS. Basic residues predominate over residues 58 to 70; sequence HTTKKPWRQKGTG.

It belongs to the universal ribosomal protein uL4 family. As to quaternary structure, part of the 50S ribosomal subunit.

In terms of biological role, one of the primary rRNA binding proteins, this protein initially binds near the 5'-end of the 23S rRNA. It is important during the early stages of 50S assembly. It makes multiple contacts with different domains of the 23S rRNA in the assembled 50S subunit and ribosome. Functionally, forms part of the polypeptide exit tunnel. This chain is Large ribosomal subunit protein uL4, found in Burkholderia lata (strain ATCC 17760 / DSM 23089 / LMG 22485 / NCIMB 9086 / R18194 / 383).